Here is a 557-residue protein sequence, read N- to C-terminus: High-affinity hexose transporter ght4 (557 aa).

Topologically, residues 1–9 are cytoplasmic; the sequence is MGRTLTSVL. A helical membrane pass occupies residues 10 to 30; it reads VVFISMAGWLGGADTGSISGI. The Extracellular segment spans residues 31 to 58; that stretch reads LGMRDFQSRFADRYNPITNSYSYSAWRQ. Residues 59–79 form a helical membrane-spanning segment; that stretch reads ALLTGTVNAGCLFGAMLSSPF. Topologically, residues 80–87 are cytoplasmic; that stretch reads TEAIGKKY. The helical transmembrane segment at 88-108 threads the bilayer; that stretch reads SIAFFSGCYIIGQILLVTAVP. Residues 109–112 are Extracellular-facing; it reads SWVQ. A helical transmembrane segment spans residues 113 to 133; sequence IMVGKLFTGLTIGALSVLSPG. Over 134-144 the chain is Cytoplasmic; it reads YQSEVAPPQIR. Residues 145-165 traverse the membrane as a helical segment; sequence GAVVSTYQLFQTCGTLIAACI. Over 166-179 the chain is Extracellular; it reads NMGTHKLRKTASWR. The helical transmembrane segment at 180–200 threads the bilayer; the sequence is TSFGINILWGIFLMVGVLFLP. Residues 201-266 are Cytoplasmic-facing; that stretch reads ESPRYLIYKG…VFGKEVRYRT (66 aa). Residues 267 to 285 traverse the membrane as a helical segment; the sequence is VLGFLTMLLRELIGNNYYF. Residues 286-301 lie on the Extracellular side of the membrane; sequence YYATQVFKGTGMTDIF. Residues 302–322 traverse the membrane as a helical segment; it reads LPAVILGAINFGTTFGALYTI. The Cytoplasmic segment spans residues 323-328; sequence DNLGRR. A helical membrane pass occupies residues 329–349; that stretch reads NPLIFGAAFQSICFFIYAAVG. Residues 350 to 363 lie on the Extracellular side of the membrane; sequence DRKLIYKNGTSDHR. Asn357 carries an N-linked (GlcNAc...) asparagine glycan. The chain crosses the membrane as a helical span at residues 364–384; the sequence is AGAVMIVFSCLFLFSYCCSWG. The Cytoplasmic portion of the chain corresponds to 385–404; that stretch reads PMGWVIVGETFPIRYRSKCA. The helical transmembrane segment at 405-425 threads the bilayer; that stretch reads AVATSGNWLGNFMVSFFTPFI. The Extracellular segment spans residues 426 to 432; that stretch reads SNSIGFK. Residues 433-453 traverse the membrane as a helical segment; it reads LGYIYACINMTSAFQIFLMAK. Over 454–557 the chain is Cytoplasmic; it reads ETKGLTLEEV…VSEESHPTWV (104 aa). Over residues 492–514 the composition is skewed to basic and acidic residues; it reads KEEEKREREKSKGYRGQEERFIE. Residues 492–557 are disordered; sequence KEEEKREREK…VSEESHPTWV (66 aa). Positions 524–536 are enriched in low complexity; the sequence is SSASSESFASAGA. The span at 547 to 557 shows a compositional bias: basic and acidic residues; it reads NVSEESHPTWV.

It belongs to the major facilitator superfamily. Sugar transporter (TC 2.A.1.1) family.

Its subcellular location is the membrane. The protein is High-affinity hexose transporter ght4 (ght4) of Schizosaccharomyces pombe (strain 972 / ATCC 24843) (Fission yeast).